The sequence spans 384 residues: MRAVVIDGAGSVRVNTQPDPALPGPDGVVVAVTAAGICGSDLHFYEGEYPFTEPVALGHEAVGTIVEAGPQVRTVGVGDLVMVSSVAGCGVCPGCETHDPVMCFSGPMIFGAGVLGGAQADLLAVPAADFQVLKIPEGITTEQALLLTDNLATGWAAAQRADISFGSAVAVIGLGAVGLCALRSAFIHGAATVFAVDRVKGRLQRAATWGATPIPSPAAETILAATRGRGADSVIDAVGTDASMSDALNAVRPGGTVSVVGVHDLQPFPVPALTCLLRSITLRMTMAPVQRTWPELIPLLQSGRLDVDGIFTTTLPLDEAAKGYATARARSGEELRFCLRPDSRDVLGAHETVDLYVHVRRCQSVADLQLEGAADGVDGPSMLN.

The Zn(2+) site is built by C38, H59, C89, C92, C95, and C103.

The protein belongs to the zinc-containing alcohol dehydrogenase family. Zn(2+) is required as a cofactor.

It carries out the reaction a primary alcohol + NAD(+) = an aldehyde + NADH + H(+). It catalyses the reaction a secondary alcohol + NAD(+) = a ketone + NADH + H(+). The chain is Probable zinc-binding alcohol dehydrogenase Rv1895 from Mycobacterium tuberculosis (strain ATCC 25618 / H37Rv).